The sequence spans 301 residues: uncharacterized protein (301 aa).

Catalysis depends on charge relay system residues Ser-44 and Tyr-107. The active-site Proton donor is the Tyr-133. The active-site Schiff-base intermediate with substrate is the Lys-162.

This sequence belongs to the DapA family. Homotetramer.

It is found in the cytoplasm. This is an uncharacterized protein from Pyrobaculum islandicum (strain DSM 4184 / JCM 9189 / GEO3).